Consider the following 409-residue polypeptide: MAREKFERTKPHVNIGTIGHVDHGKTTLTAAITATLATAGGAVAKDYSDIDGAPEERARGITINTAHVEYETADRHYAHVDCPGHADYVKNMITGAAQMDGAILVVSAADGPMPQTREHILLAKQVGVPHIVVFLNKQDQVDDDELLELVELEVRELLSTYDFPGDDIPICPGSALQAIEALSSNPDVKRGDNPWVDKIFALMDAVDAYIPTPERDVEKTFLMAIEDVFSITGRGTVATGRIERGVVKVGDNVEIVGVGDTQTTTITGIEMFQKTLEEGFAGDNVGILLRGVTRENIERGMVLSKPGTITPHTNFESEVYVLTKEEGGRHTPFFTGYRPQFYVRTTDVTGSIEQFTADDGTIVEMVMPGDRIKMTAELIYPVAIEEGMRFAIREGGRTIGAGVVSKIVK.

Residues 10-214 (KPHVNIGTIG…AVDAYIPTPE (205 aa)) enclose the tr-type G domain. A G1 region spans residues 19–26 (GHVDHGKT). Residue 19-26 (GHVDHGKT) coordinates GTP. Threonine 26 is a Mg(2+) binding site. The tract at residues 60–64 (GITIN) is G2. The segment at 81 to 84 (DCPG) is G3. Residues 81 to 85 (DCPGH) and 136 to 139 (NKQD) each bind GTP. The G4 stretch occupies residues 136–139 (NKQD). The interval 174–176 (SAL) is G5.

Belongs to the TRAFAC class translation factor GTPase superfamily. Classic translation factor GTPase family. EF-Tu/EF-1A subfamily.

The protein resides in the plastid. It localises to the chloroplast. The enzyme catalyses GTP + H2O = GDP + phosphate + H(+). GTP hydrolase that promotes the GTP-dependent binding of aminoacyl-tRNA to the A-site of ribosomes during protein biosynthesis. The chain is Elongation factor Tu, chloroplastic (tufA) from Thalassiosira pseudonana (Marine diatom).